The primary structure comprises 392 residues: Vascular endothelial growth factor A, long form (392 aa).

2 disordered regions span residues 1–44 (MTDR…VEGV) and 73–174 (DKPI…GPGR). Basic and acidic residues predominate over residues 89-104 (PGPEKRGEEEKEEERG). 2 stretches are compositionally biased toward low complexity: residues 121 to 143 (AAVC…ASVP) and 158 to 174 (PRSP…GPGR). Disulfide bonds link Cys229–Cys271, Cys260–Cys305, and Cys264–Cys307. Asn278 is a glycosylation site (N-linked (GlcNAc...) asparagine). The segment covering 309 to 320 (PKKDRTKPEKKS) has biased composition (basic and acidic residues). The disordered stretch occupies residues 309 to 337 (PKKDRTKPEKKSVRGKGKGQKRKRKKSRF). Basic residues predominate over residues 321–337 (VRGKGKGQKRKRKKSRF).

The protein belongs to the PDGF/VEGF growth factor family. As to quaternary structure, homodimer; disulfide-linked. Also found as heterodimer with PGF. Interacts with NRP1. Interacts with isoform 2 of BSG. Interacts with CD82; this interaction inhibits VEGFA-mediated signaling pathway. In terms of processing, produced by use of an alternative upstream CUG codon and post-translationally processed into the N-terminal N-VEGF form and the C-terminal secreted VEGFA form. As to expression, in developing embryos, expressed mainly in the choroid plexus, paraventricular neuroepithelium, placenta and kidney glomeruli. Also found in bronchial epithelium, adrenal gland and in seminiferous tubules of testis. High expression continues in kidney glomeruli and choroid plexus in adults.

The protein resides in the cytoplasm. It is found in the nucleus. The protein localises to the secreted. It localises to the endoplasmic reticulum. Its subcellular location is the golgi apparatus. The protein resides in the extracellular space. It is found in the extracellular matrix. The protein localises to the cell membrane. Functionally, participates in the induction of key genes involved in the response to hypoxia and in the induction of angiogenesis such as HIF1A. Involved in protecting cells from hypoxia-mediated cell death. Its function is as follows. Growth factor active in angiogenesis, vasculogenesis and endothelial cell growth. Induces endothelial cell proliferation, promotes cell migration, inhibits apoptosis and induces permeabilization of blood vessels. Binds to the FLT1/VEGFR1 and KDR/VEGFR2 receptors, heparan sulfate and heparin. Binds to the NRP1/neuropilin-1 receptor. Binding to NRP1 receptor initiates a signaling pathway needed for motor neuron axon guidance and cell body migration, including for the caudal migration of facial motor neurons from rhombomere 4 to rhombomere 6 during embryonic development. Also binds the DEAR/FBXW7-AS1 receptor. May play a role in increasing vascular permeability during lactation, when increased transport of molecules from the blood is required for efficient milk protein synthesis. The polypeptide is Vascular endothelial growth factor A, long form (Vegfa) (Mus musculus (Mouse)).